Consider the following 613-residue polypeptide: Dihydroxy-acid dehydratase (613 aa).

Asp81 contacts Mg(2+). A [2Fe-2S] cluster-binding site is contributed by Cys122. 2 residues coordinate Mg(2+): Asp123 and Lys124. Lys124 is modified (N6-carboxylysine). Cys195 serves as a coordination point for [2Fe-2S] cluster. Glu491 lines the Mg(2+) pocket. The active-site Proton acceptor is the Ser517.

It belongs to the IlvD/Edd family. Homodimer. The cofactor is [2Fe-2S] cluster. Mg(2+) is required as a cofactor.

It carries out the reaction (2R)-2,3-dihydroxy-3-methylbutanoate = 3-methyl-2-oxobutanoate + H2O. The catalysed reaction is (2R,3R)-2,3-dihydroxy-3-methylpentanoate = (S)-3-methyl-2-oxopentanoate + H2O. Its pathway is amino-acid biosynthesis; L-isoleucine biosynthesis; L-isoleucine from 2-oxobutanoate: step 3/4. The protein operates within amino-acid biosynthesis; L-valine biosynthesis; L-valine from pyruvate: step 3/4. Functions in the biosynthesis of branched-chain amino acids. Catalyzes the dehydration of (2R,3R)-2,3-dihydroxy-3-methylpentanoate (2,3-dihydroxy-3-methylvalerate) into 2-oxo-3-methylpentanoate (2-oxo-3-methylvalerate) and of (2R)-2,3-dihydroxy-3-methylbutanoate (2,3-dihydroxyisovalerate) into 2-oxo-3-methylbutanoate (2-oxoisovalerate), the penultimate precursor to L-isoleucine and L-valine, respectively. The sequence is that of Dihydroxy-acid dehydratase from Nitrobacter hamburgensis (strain DSM 10229 / NCIMB 13809 / X14).